Consider the following 297-residue polypeptide: ER membrane protein complex subunit 2 (297 aa).

N-acetylalanine is present on Ala2. TPR repeat units lie at residues 87–120, 155–188, and 192–225; these read HRVK…DPTN, QEAW…NPHN, and CQQY…NNRN. Lys255 is subject to N6-acetyllysine.

It belongs to the EMC2 family. Component of the ER membrane protein complex (EMC). Interacts with WNK1 (via amphipathic alpha-helix region); promoting the ER membrane protein complex assembly by preventing EMC2 ubiquitination. In terms of processing, ubiquitinated when soluble in the cytoplasm, leading to its degradation by the proteasome. Interaction with EMC2 prevents its ubiquitination and degradation.

It is found in the endoplasmic reticulum membrane. Its function is as follows. Part of the endoplasmic reticulum membrane protein complex (EMC) that enables the energy-independent insertion into endoplasmic reticulum membranes of newly synthesized membrane proteins. Preferentially accommodates proteins with transmembrane domains that are weakly hydrophobic or contain destabilizing features such as charged and aromatic residues. Involved in the cotranslational insertion of multi-pass membrane proteins in which stop-transfer membrane-anchor sequences become ER membrane spanning helices. It is also required for the post-translational insertion of tail-anchored/TA proteins in endoplasmic reticulum membranes. By mediating the proper cotranslational insertion of N-terminal transmembrane domains in an N-exo topology, with translocated N-terminus in the lumen of the ER, controls the topology of multi-pass membrane proteins like the G protein-coupled receptors. By regulating the insertion of various proteins in membranes, it is indirectly involved in many cellular processes. This is ER membrane protein complex subunit 2 from Homo sapiens (Human).